Reading from the N-terminus, the 190-residue chain is Segregation and condensation protein B (190 aa).

This sequence belongs to the ScpB family. In terms of assembly, homodimer. Homodimerization may be required to stabilize the binding of ScpA to the Smc head domains. Component of a cohesin-like complex composed of ScpA, ScpB and the Smc homodimer, in which ScpA and ScpB bind to the head domain of Smc. The presence of the three proteins is required for the association of the complex with DNA.

Its subcellular location is the cytoplasm. Participates in chromosomal partition during cell division. May act via the formation of a condensin-like complex containing Smc and ScpA that pull DNA away from mid-cell into both cell halves. This chain is Segregation and condensation protein B, found in Bacillus cereus (strain ATCC 14579 / DSM 31 / CCUG 7414 / JCM 2152 / NBRC 15305 / NCIMB 9373 / NCTC 2599 / NRRL B-3711).